Consider the following 61-residue polypeptide: Large ribosomal subunit protein bL32 (61 aa).

Positions 1–10 are enriched in basic residues; that stretch reads MAQPKKKTSN. The tract at residues 1-23 is disordered; sequence MAQPKKKTSNAKRDQRRATWKRK.

Belongs to the bacterial ribosomal protein bL32 family.

The chain is Large ribosomal subunit protein bL32 from Gloeobacter violaceus (strain ATCC 29082 / PCC 7421).